The primary structure comprises 243 residues: Polycomb group RING finger protein 1 (243 aa).

Lysine 12 participates in a covalent cross-link: Glycyl lysine isopeptide (Lys-Gly) (interchain with G-Cter in SUMO2). The segment at 35–74 adopts an RING-type zinc-finger fold; that stretch reads CCLCAGYFVDATTITECLHTFCKSCIVKYLQTSKYCPMCN. Positions 74 to 231 are necessary for repressor activity; the sequence is NIKIHETQPL…LSRWFGKPSP (158 aa). Lysine 76 participates in a covalent cross-link: Glycyl lysine isopeptide (Lys-Gly) (interchain with G-Cter in SUMO2). Residues 138–239 are required for the interaction with the KDM2B-SKP1 heterodimeric complex; it reads LPFTSFDHYY…SPLLLQYSVK (102 aa). Positions 151–239 are RING-finger and WD40-associated ubiquitin-like domain (RAWUL); sufficient for interaction with BCOR and BCORL1; the sequence is EQLSLCLERL…SPLLLQYSVK (89 aa).

In terms of assembly, interacts with BCORL1, forming heterodimers. The PCGF1-BCORL1 heterodimeric complex interacts with the KDM2B-SKP1 heterodimeric complex to form a homotetrameric polycomb repression complex 1 (PRC1.1). Component of the repressive BCOR complex containing a Polycomb group subcomplex at least composed of RYBP, RING1 and RNF2/RING2. Specifically interacts with BCOR, RING1 and RNF2/RING2. Component of a PRC1-like complex. Interacts with CBX6, CBX7 and CBX8. Interacts with DPPA4, NANOG, POU5F1 and RYBP. In terms of tissue distribution, highly expressed in brain, cerebellum, heart and testis.

The protein localises to the nucleus. Its function is as follows. Component of the Polycomb group (PcG) multiprotein BCOR complex, a complex required to maintain the transcriptionally repressive state of some genes, such as BCL6 and the cyclin-dependent kinase inhibitor, CDKN1A. Transcriptional repressor that may be targeted to the DNA by BCL6; this transcription repressor activity may be related to PKC signaling pathway. Represses CDKN1A expression by binding to its promoter, and this repression is dependent on the retinoic acid response element (RARE element). Promotes cell cycle progression and enhances cell proliferation as well. May have a positive role in tumor cell growth by down-regulating CDKN1A. Component of a Polycomb group (PcG) multiprotein PRC1-like complex, a complex class required to maintain the transcriptionally repressive state of many genes, including Hox genes, throughout development. PcG PRC1 complex acts via chromatin remodeling and modification of histones; it mediates monoubiquitination of histone H2A 'Lys-119', rendering chromatin heritably changed in its expressibility. Within the PRC1-like complex, regulates RNF2 ubiquitin ligase activity. Regulates the expression of DPPA4 and NANOG in the NT2 embryonic carcinoma cells. This is Polycomb group RING finger protein 1 (Pcgf1) from Rattus norvegicus (Rat).